Reading from the N-terminus, the 331-residue chain is Anthranilate phosphoribosyltransferase (331 aa).

Residues Gly79, 82–83 (GD), Ser87, 89–92 (NIST), 107–115 (KHCNGNISS), and Ser119 each bind 5-phospho-alpha-D-ribose 1-diphosphate. Gly79 serves as a coordination point for anthranilate. Residue Ser91 coordinates Mg(2+). Residue Asn110 coordinates anthranilate. Arg165 contributes to the anthranilate binding site. Residues Asp223 and Glu224 each contribute to the Mg(2+) site.

This sequence belongs to the anthranilate phosphoribosyltransferase family. As to quaternary structure, homodimer. It depends on Mg(2+) as a cofactor.

The enzyme catalyses N-(5-phospho-beta-D-ribosyl)anthranilate + diphosphate = 5-phospho-alpha-D-ribose 1-diphosphate + anthranilate. It participates in amino-acid biosynthesis; L-tryptophan biosynthesis; L-tryptophan from chorismate: step 2/5. Catalyzes the transfer of the phosphoribosyl group of 5-phosphorylribose-1-pyrophosphate (PRPP) to anthranilate to yield N-(5'-phosphoribosyl)-anthranilate (PRA). This is Anthranilate phosphoribosyltransferase from Buchnera aphidicola subsp. Baizongia pistaciae (strain Bp).